The sequence spans 346 residues: NADH-quinone oxidoreductase subunit H (346 aa).

8 helical membrane passes run 6 to 26 (ILFWLLKSGLFFFILITACAY), 76 to 96 (IMYLIAPAISMTCAIMAWSVV), 128 to 148 (ILFLFAISSLAVYGIIIAGWA), 166 to 186 (ISYELPLSMSVVSIVILTGSL), 198 to 218 (LWNIFKLPGFIAFCLFVVAMF), 260 to 280 (ITMSCVVTLLFFGGYQVPFGI), 289 to 309 (LFGLFFFLGKVLFFTFLFVWV), and 324 to 344 (LGWKKLIPWAVLNILIASLYI).

The protein belongs to the complex I subunit 1 family. As to quaternary structure, NDH-1 is composed of 14 different subunits. Subunits NuoA, H, J, K, L, M, N constitute the membrane sector of the complex.

Its subcellular location is the cell inner membrane. The enzyme catalyses a quinone + NADH + 5 H(+)(in) = a quinol + NAD(+) + 4 H(+)(out). Its function is as follows. NDH-1 shuttles electrons from NADH, via FMN and iron-sulfur (Fe-S) centers, to quinones in the respiratory chain. The immediate electron acceptor for the enzyme in this species is believed to be ubiquinone. Couples the redox reaction to proton translocation (for every two electrons transferred, four hydrogen ions are translocated across the cytoplasmic membrane), and thus conserves the redox energy in a proton gradient. This subunit may bind ubiquinone. In Leptospira borgpetersenii serovar Hardjo-bovis (strain JB197), this protein is NADH-quinone oxidoreductase subunit H.